A 1312-amino-acid polypeptide reads, in one-letter code: DNA repair protein RAD50 (1312 aa).

ATP contacts are provided by R13, N36, G37, G39, K40, T41, T42, I65, D67, and Q158. A Mg(2+)-binding site is contributed by T41. Q158 is a Mg(2+) binding site. Coiled-coil stretches lie at residues 185–347 (TKAL…LIRR) and 403–558 (QDLT…LQND). S469 carries the phosphoserine modification. Position 568 is a phosphothreonine (T568). Residues 640-678 (DCTIDEYNDVLEETELSYKTALENLKMHQTTLEFNRKAL) adopt a coiled-coil conformation. The region spanning 640 to 741 (DCTIDEYNDV…SLRLLEKHII (102 aa)) is the Zinc-hook domain. C687 and C690 together coordinate Zn(2+). 2 coiled-coil regions span residues 712–741 (DANF…KHII) and 787–1108 (LAES…DIEK).

The protein belongs to the SMC family. RAD50 subfamily. As to quaternary structure, component of the MRN complex composed of two heterodimers RAD50 and MRE11 associated with a single XRS2. The MRN complexes dimerize on DNA to form joined MRN-MRN oligomers required for DNA double-strand break repair. Zn(2+) serves as cofactor.

Its subcellular location is the nucleus. It localises to the chromosome. The enzyme catalyses ATP + H2O = ADP + phosphate + H(+). In terms of biological role, component of the MRN complex, which plays a central role in double-strand break (DSB) repair, DNA recombination, maintenance of telomere integrity and meiosis. The MRN complex is involved in the repair of DNA double-strand breaks (DSBs) via homologous recombination (HR), an error-free mechanism which primarily occurs during S and G2 phases. The complex (1) mediates the end resection of damaged DNA, which generates proper single-stranded DNA, a key initial steps in HR, and is (2) required for the recruitment of other repair factors and efficient activation of TEL1/ATM and ATR upon DNA damage. The MRN complex possesses single-strand endonuclease activity and double-strand-specific 3'-5' exonuclease activity, which are provided by MRE11, to initiate end resection, which is required for single-strand invasion and recombination. Within the complex, RAD50 is both required to bind DNA ends and hold them in close proximity and regulate the activity of MRE11. RAD50 provides an ATP-dependent control of MRE11 by positioning DNA ends into the MRE11 active site: ATP-binding induces a large structural change from an open form with accessible MRE11 nuclease sites into a closed form. The MRN complex is also required for the processing of R-loops. The chain is DNA repair protein RAD50 from Saccharomyces cerevisiae (strain ATCC 204508 / S288c) (Baker's yeast).